The primary structure comprises 393 residues: uncharacterized protein (393 aa).

The segment at 345–393 is disordered; the sequence is PNKWATDDAARREMERTRKARYRAKNRAVADPEDSPPGKRLRRGPKSST. Residues 349–361 are compositionally biased toward basic and acidic residues; the sequence is ATDDAARREMERT. A compositionally biased stretch (basic residues) spans 383–393; that stretch reads KRLRRGPKSST.

This is an uncharacterized protein from Ictalurid herpesvirus 1 (strain Auburn) (IcHV-1).